Here is a 120-residue protein sequence, read N- to C-terminus: Large ribosomal subunit protein bL17 (120 aa).

Belongs to the bacterial ribosomal protein bL17 family. As to quaternary structure, part of the 50S ribosomal subunit. Contacts protein L32.

The sequence is that of Large ribosomal subunit protein bL17 from Mesomycoplasma hyopneumoniae (strain 7448) (Mycoplasma hyopneumoniae).